The following is a 376-amino-acid chain: Polar flagellin A (376 aa).

2 coiled-coil regions span residues Ser103–Glu128 and Phe310–Thr338.

The protein belongs to the bacterial flagellin family. In terms of assembly, heteromer of multiple flagellin subunits including FlaA, FlaB/D, FlaC, FlaE and FlaF.

It localises to the secreted. The protein resides in the bacterial flagellum. Functionally, flagellin is the subunit protein which polymerizes to form the filaments of bacterial flagella. FlaA is not essential for polar flagellar synthesis and swimming motility. Homomer of FlaA is able to form a functional filament. The sequence is that of Polar flagellin A (flaA) from Vibrio parahaemolyticus serotype O3:K6 (strain RIMD 2210633).